The sequence spans 312 residues: uncharacterized protein (312 aa).

Transmembrane regions (helical) follow at residues 9–29 (LTLT…GLFI), 115–135 (LATL…IGFI), 187–207 (ITIA…DYIT), 224–244 (ITVA…AGEF), 264–284 (ILSS…IYGF), and 292–312 (MIST…TLIL).

It localises to the cell membrane. This is an uncharacterized protein from Methanocaldococcus jannaschii (strain ATCC 43067 / DSM 2661 / JAL-1 / JCM 10045 / NBRC 100440) (Methanococcus jannaschii).